A 216-amino-acid chain; its full sequence is Ras-related protein Rab11C (216 aa).

19-26 (GDSGVGKS) contacts GTP. The short motif at 41–49 (SKSTIGVEF) is the Effector region element. Residues 67 to 71 (DTAGQ) and 125 to 128 (NKSD) contribute to the GTP site. 2 S-geranylgeranyl cysteine lipidation sites follow: C213 and C214.

This sequence belongs to the small GTPase superfamily. Rab family.

It is found in the cell membrane. The sequence is that of Ras-related protein Rab11C (RAB11C) from Lotus japonicus (Lotus corniculatus var. japonicus).